A 624-amino-acid chain; its full sequence is MSQPHSVPNTRALALGALGVVFGDIGTSPLYTMKEVFGGHHLALTQDNVLGILSLIFWALILVVSLKYVLVIMRADNKGEGGILALLSLVQGQAPLRSRARWIIMSLGFLGASLFFGDSLITPAISVLSAVEGLEIGAPALHPFILPLALGILVGLFAIQRRGTASIGRLFGPIMLLWFAVLGVLGAIGIAKHPQVLAALLPIHAIQFFMTHGTAGFLILGAVVLAITGAEALYADMGHFGTRPIRLTWFGFVLPALVVNYFGQGALLLAEPAAVRNPFYMLAPDWALYPMVALATAATVIASQAVISGAFSVTRQVVQMGYAPRLVIRHTSATAAGQIYIPFVNWTLAAGVALLVLGFQSSSNLAAAYGIAVTATFAIDTVLLALLMRVNWNLGRAPTLVAAALFLTLDLAFFGANAVKIPEGGWFPLVVAVVVFTILVTWRRGREIVGARLHERGLPLAPFVESLLAHPPARVGGTAVFMTTDPSGVPLALLHNLKHNKVLHERVVILNVRYGEVPYVPAEHRLAVTKLGEGVFHVVVRYGFMDDVDIPKALAECPCGMDFDMMDTTFFLSRENLIPARGDGGMMVWREHLFATMARNAASPMTFFRIPPNRVVELGAQLEI.

Helical transmembrane passes span Leu13 to Met33, Ile52 to Ile72, Trp102 to Thr122, Pro139 to Ile159, Leu170 to Ile190, Phe208 to Thr228, Trp249 to Leu269, Met291 to Phe311, Ile339 to Phe359, Ala368 to Met388, Thr399 to Val419, and Ile421 to Thr441.

The protein belongs to the HAK/KUP transporter (TC 2.A.72) family.

The protein resides in the cell inner membrane. It carries out the reaction K(+)(in) + H(+)(in) = K(+)(out) + H(+)(out). Functionally, transport of potassium into the cell. Likely operates as a K(+):H(+) symporter. The chain is Probable potassium transport system protein Kup from Thiobacillus denitrificans (strain ATCC 25259 / T1).